A 111-amino-acid chain; its full sequence is Large ribosomal subunit protein uL22 (111 aa).

The protein belongs to the universal ribosomal protein uL22 family. Part of the 50S ribosomal subunit.

In terms of biological role, this protein binds specifically to 23S rRNA; its binding is stimulated by other ribosomal proteins, e.g. L4, L17, and L20. It is important during the early stages of 50S assembly. It makes multiple contacts with different domains of the 23S rRNA in the assembled 50S subunit and ribosome. Its function is as follows. The globular domain of the protein is located near the polypeptide exit tunnel on the outside of the subunit, while an extended beta-hairpin is found that lines the wall of the exit tunnel in the center of the 70S ribosome. This Clostridium beijerinckii (strain ATCC 51743 / NCIMB 8052) (Clostridium acetobutylicum) protein is Large ribosomal subunit protein uL22.